The chain runs to 87 residues: Hemocyanin alpha chain (87 aa).

Belongs to the tyrosinase family. Hemocyanin subfamily. As to quaternary structure, polymer that contains six different types of chains (alpha, beta, gamma, delta, epsilon, and zeta). As to expression, hemolymph.

Its subcellular location is the secreted. The protein resides in the extracellular space. Hemocyanins are copper-containing oxygen carriers occurring freely dissolved in the hemolymph of many mollusks and arthropods. The protein is Hemocyanin alpha chain of Tachypleus tridentatus (Japanese horseshoe crab).